The primary structure comprises 335 residues: Ornithine carbamoyltransferase (335 aa).

Residues 56 to 59, Q83, R107, and 134 to 137 each bind carbamoyl phosphate; these read STRT and HPTQ. L-ornithine-binding positions include N168, D232, and 236 to 237; that span reads SM. Residues 274-275 and R320 each bind carbamoyl phosphate; that span reads CL.

It belongs to the aspartate/ornithine carbamoyltransferase superfamily. OTCase family.

It localises to the cytoplasm. It catalyses the reaction carbamoyl phosphate + L-ornithine = L-citrulline + phosphate + H(+). The protein operates within amino-acid biosynthesis; L-arginine biosynthesis; L-arginine from L-ornithine and carbamoyl phosphate: step 1/3. In terms of biological role, reversibly catalyzes the transfer of the carbamoyl group from carbamoyl phosphate (CP) to the N(epsilon) atom of ornithine (ORN) to produce L-citrulline. In Yersinia pseudotuberculosis serotype I (strain IP32953), this protein is Ornithine carbamoyltransferase.